A 311-amino-acid polypeptide reads, in one-letter code: Malate dehydrogenase (311 aa).

Residues G7–G13 and D34 contribute to the NAD(+) site. R81 and R87 together coordinate substrate. Residues N94 and I117–N119 each bind NAD(+). N119 and R153 together coordinate substrate. The active-site Proton acceptor is H177. M227 lines the NAD(+) pocket.

This sequence belongs to the LDH/MDH superfamily. MDH type 1 family. In terms of assembly, homodimer.

The catalysed reaction is (S)-malate + NAD(+) = oxaloacetate + NADH + H(+). Its function is as follows. Catalyzes the reversible oxidation of malate to oxaloacetate. The polypeptide is Malate dehydrogenase (Erwinia tasmaniensis (strain DSM 17950 / CFBP 7177 / CIP 109463 / NCPPB 4357 / Et1/99)).